A 430-amino-acid chain; its full sequence is MAEPRQEFDTAEDHAEGYALLQDQEGEHGLKASPLQTPADDGPEEPVSETSDAKSTPTAEDVTAPLVDERTPGEQAATQPPTDIPEGTTAEEAGIGDTPNMEDQAAGHVTQARMVSKGKEGTGSEDRKAKGADSKTGTKIATPRGTAPPGQKGTANATRIPAKTTPSPKTPPGTGEPAKSGDRSGYSSPGSPGTPGSRSRTPSLPTPPTREPKKVAVVRTPPKSPSSTKSRLQTAPVPMPDLKNVRSKIGSTENLKHQPGGGKVQIINKKLDLSNVQSKCGSKDNIKHVPGGGSVQIVYKPVDLSKVTSKCGSLGNIHHKPGGGQVEVKSEKLDFKDRVQSKIGSLDNITHVPGGGNKKIETHKLTFRENAKAKTDHGAEIVYKSPVVSGDTSPRHLSNVSSTGSINMVDSPQLATLADEVSASLAKQGL.

Positions methionine 1–glutamate 16 are enriched in basic and acidic residues. Positions methionine 1–valine 245 are disordered. At alanine 2 the chain carries N-acetylalanine. Tyrosine 18 is subject to Phosphotyrosine. Lysine 31 is covalently cross-linked (Glycyl lysine isopeptide (Lys-Gly) (interchain with G-Cter in ubiquitin)). Phosphoserine is present on residues serine 33 and serine 48. Residues serine 48–threonine 58 are compositionally biased toward polar residues. Residues threonine 56, threonine 58, and threonine 98 each carry the phosphothreonine modification. The span at lysine 117 to aspartate 133 shows a compositional bias: basic and acidic residues. Threonine 142 is subject to Phosphothreonine. Position 144 is an omega-N-methylarginine (arginine 144). An N6,N6-dimethyllysine; alternate modification is found at lysine 152. The residue at position 152 (lysine 152) is an N6-acetyllysine; alternate. Phosphothreonine is present on residues threonine 158, threonine 164, threonine 165, and threonine 170. Residues proline 161–serine 203 are compositionally biased toward low complexity. Serine 180 and serine 184 each carry phosphoserine. Tyrosine 186 bears the Phosphotyrosine mark. Phosphoserine is present on residues serine 187, serine 188, and serine 191. Residues threonine 194 and threonine 201 each carry the phosphothreonine modification. At serine 203 the chain carries Phosphoserine. Phosphothreonine is present on threonine 206. At lysine 214 the chain carries N6-acetyllysine. Threonine 220 carries the phosphothreonine modification. A phosphoserine mark is found at serine 224 and serine 226. Tau/MAP repeat units lie at residues glutamine 233–lysine 263, valine 264–serine 294, valine 295–glutamine 325, and valine 326–asparagine 357. Lysine 243 participates in a covalent cross-link: Glycyl lysine isopeptide (Lys-Gly) (interchain with G-Cter in ubiquitin). Residue lysine 248 is modified to N6-acetyllysine; alternate. Lysine 248 bears the N6-methyllysine; alternate mark. Lysine 248 participates in a covalent cross-link: Glycyl lysine isopeptide (Lys-Gly) (interchain with G-Cter in ubiquitin); alternate. Serine 251 is subject to Phosphoserine. Lysine 256 participates in a covalent cross-link: Glycyl lysine isopeptide (Lys-Gly) (interchain with G-Cter in ubiquitin). Lysine 270 is subject to N6-acetyllysine; alternate. A Glycyl lysine isopeptide (Lys-Gly) (interchain with G-Cter in ubiquitin); alternate cross-link involves residue lysine 270. A phosphoserine mark is found at serine 274 and serine 278. The residue at position 279 (lysine 279) is an N6-acetyllysine. Cysteine 280 and cysteine 311 are disulfide-bonded. Serine 282 is subject to Phosphoserine. N6-acetyllysine; alternate is present on lysine 287. Lysine 287 is covalently cross-linked (Glycyl lysine isopeptide (Lys-Gly) (interchain with G-Cter in ubiquitin); alternate). A Phosphoserine modification is found at serine 294. Lysine 300 carries the post-translational modification N6,N6-dimethyllysine; alternate. Residues lysine 300, lysine 306, and lysine 310 each carry the N6-acetyllysine; alternate modification. Glycyl lysine isopeptide (Lys-Gly) (interchain with G-Cter in ubiquitin); alternate cross-links involve residues lysine 300, lysine 306, and lysine 310. Phosphoserine is present on serine 313. An N6-acetyllysine; alternate mark is found at lysine 320, lysine 332, and lysine 336. Residues lysine 320, lysine 332, and lysine 336 each participate in a glycyl lysine isopeptide (Lys-Gly) (interchain with G-Cter in ubiquitin); alternate cross-link. Arginine 338 is modified (omega-N-methylarginine). Residue serine 341 is modified to Phosphoserine. Lysine 342 participates in a covalent cross-link: Glycyl lysine isopeptide (Lys-Gly) (interchain with G-Cter in ubiquitin). Serine 345 carries the phosphoserine modification. Lysine 358 carries the N6-acetyllysine; alternate modification. Residue lysine 358 forms a Glycyl lysine isopeptide (Lys-Gly) (interchain with G-Cter in ubiquitin); alternate linkage. Lysine 364 participates in a covalent cross-link: Glycyl lysine isopeptide (Lys-Gly) (interchain with G-Cter in ubiquitin). The residue at position 374 (lysine 374) is an N6-acetyllysine; alternate. Residue lysine 374 forms a Glycyl lysine isopeptide (Lys-Gly) (interchain with G-Cter in ubiquitin); alternate linkage. Tyrosine 383 carries the post-translational modification Phosphotyrosine. A phosphoserine mark is found at serine 385 and serine 389. A disordered region spans residues valine 387–isoleucine 406. Positions glycine 390 to isoleucine 406 are enriched in polar residues. Residue threonine 392 is modified to Phosphothreonine. 4 positions are modified to phosphoserine: serine 393, serine 398, serine 405, and serine 411. Phosphothreonine is present on threonine 416.

As to quaternary structure, interacts with MARK1, MARK2, MARK3 and MARK4. Interacts with SQSTM1 when polyubiquitinated. Interacts with PSMC2 through SQSTM1. Interacts with FKBP4. Binds to CSNK1D. Interacts with SGK1. Interacts with PIN1. Interacts with LRRK2. Interacts with LRP1, leading to endocytosis; this interaction is reduced in the presence of LRPAP1/RAP. Polyubiquitinated. Requires functional TRAF6 and may provoke SQSTM1-dependent degradation by the proteasome. In terms of processing, phosphorylation at various serine and threonine residues in S-P or T-P motifs by proline-directed protein kinases (PDPK1, CDK1, CDK5, GSK3, MAPK) (a few sites per protein in interphase, more in mitosis), and at serine residues in K-X-G-S motifs by MAP/microtubule affinity-regulating kinase (MARK1, MARK2, MARK3 or MARK4), causing detachment from microtubules, and their disassembly. Phosphorylation at Ser-345 by BRSK1 and BRSK2 in neurons affects ability to bind microtubules and plays a role in neuron polarization. Phosphorylated by PHK. Dephosphorylation at several serine and threonine residues by the serine/threonine phosphatase PPP5C. Post-translationally, hyperphosphorylated (in particular at Thr-170, Ser-191, Thr-194, Ser-251, and Ser-345) during hibernation. Phosphorylation is fully reversible after arousal. Highly phosphorylated tau contains a number of paired helical filaments (PHFs)-like epitopes. PHF-like phosphorylation is not associated with fibril formation. Distribution of PHF-like tau is more intense in the entorhinal cortex, hippocampus and isocortical areas. PHF-like phosphorylation-dephosphorylation during hibernation cycle is synchronized with regression-re-establishment of afferentation. It may reflect a protective mechanism in an unfavorable environment.

The protein localises to the cytoplasm. It localises to the cytosol. It is found in the cell membrane. Its subcellular location is the cytoskeleton. The protein resides in the cell projection. The protein localises to the axon. It localises to the dendrite. Functionally, promotes microtubule assembly and stability, and might be involved in the establishment and maintenance of neuronal polarity. The C-terminus binds axonal microtubules while the N-terminus binds neural plasma membrane components, suggesting that tau functions as a linker protein between both. Axonal polarity is predetermined by tau localization (in the neuronal cell) in the domain of the cell body defined by the centrosome. The short isoforms allow plasticity of the cytoskeleton whereas the longer isoforms may preferentially play a role in its stabilization. The sequence is that of Microtubule-associated protein tau (MAPT) from Spermophilus citellus (European ground squirrel).